Reading from the N-terminus, the 142-residue chain is Small ribosomal subunit protein bS18c (142 aa).

The disordered stretch occupies residues Met-1–Pro-21.

This sequence belongs to the bacterial ribosomal protein bS18 family. In terms of assembly, part of the 30S ribosomal subunit.

The protein localises to the plastid. This is Small ribosomal subunit protein bS18c from Cuscuta gronovii (Common dodder).